Consider the following 335-residue polypeptide: Transmembrane protein 120B-A (335 aa).

A coiled-coil region spans residues 1 to 40; the sequence is MSLQKCQEEWSEIEKEFQQLQETHKVYKQKLEELNSLQNL. The next 6 membrane-spanning stretches (helical) occupy residues 100–122, 130–150, 157–177, 193–213, 268–288, and 300–320; these read GLYL…AKFA, FKLY…FVLN, VFNF…SILI, VSTF…YQIF, FLLP…ITLF, and QVFV…LTTL.

It belongs to the TMEM120 family.

It localises to the nucleus inner membrane. Functionally, necessary for efficient adipogenesis. Does not show ion channel activity. This is Transmembrane protein 120B-A (tmem120b-a) from Xenopus laevis (African clawed frog).